A 156-amino-acid chain; its full sequence is MASLSWWNPAPATAAMAACSPTPTSCKTSNSLALPRSVFVSKQEELMKQAKSLLVKTQQQSKKKKNNSTNSRRTTSIQCLSQEQKWTHEGSITESLPNGMFRVKLDNADVVLGYISGKIRKNFIRLLPGDRVKIEVSRYDSSKGRIIYRLRGGREG.

The transit peptide at 1–81 directs the protein to the chloroplast; that stretch reads MASLSWWNPA…RRTTSIQCLS (81 aa). A disordered region spans residues 51–79; it reads KSLLVKTQQQSKKKKNNSTNSRRTTSIQC. Positions 67–76 are enriched in low complexity; it reads NSTNSRRTTS. Residues 82 to 151 form the S1-like domain; sequence QEQKWTHEGS…SKGRIIYRLR (70 aa).

The protein belongs to the IF-1 family. In terms of assembly, component of the 30S ribosomal translation pre-initiation complex which assembles on the 30S ribosome in the order IF-2 and IF-3, IF-1 and N-formylmethionyl-tRNA(fMet); mRNA recruitment can occur at any time during PIC assembly.

It is found in the plastid. The protein localises to the chloroplast. One of the essential components for the initiation of protein synthesis. Stabilizes the binding of IF-2 and IF-3 on the 30S subunit to which N-formylmethionyl-tRNA(fMet) subsequently binds. Helps modulate mRNA selection, yielding the 30S pre-initiation complex (PIC). Upon addition of the 50S ribosomal subunit IF-1, IF-2 and IF-3 are released leaving the mature 70S translation initiation complex. The polypeptide is Translation initiation factor IF-1, chloroplastic (infA) (Solanum lycopersicum (Tomato)).